The sequence spans 494 residues: Probable malate:quinone oxidoreductase 3 (494 aa).

Belongs to the MQO family. FAD is required as a cofactor.

The catalysed reaction is (S)-malate + a quinone = a quinol + oxaloacetate. It functions in the pathway carbohydrate metabolism; tricarboxylic acid cycle; oxaloacetate from (S)-malate (quinone route): step 1/1. This is Probable malate:quinone oxidoreductase 3 from Staphylococcus epidermidis (strain ATCC 35984 / DSM 28319 / BCRC 17069 / CCUG 31568 / BM 3577 / RP62A).